The following is a 95-amino-acid chain: Large ribosomal subunit protein bL25 (95 aa).

This sequence belongs to the bacterial ribosomal protein bL25 family. Part of the 50S ribosomal subunit; part of the 5S rRNA/L5/L18/L25 subcomplex. Contacts the 5S rRNA. Binds to the 5S rRNA independently of L5 and L18.

Functionally, this is one of the proteins that binds to the 5S RNA in the ribosome where it forms part of the central protuberance. This Shewanella woodyi (strain ATCC 51908 / MS32) protein is Large ribosomal subunit protein bL25.